The primary structure comprises 411 residues: Phospholipase ABHD3 (411 aa).

A helical; Signal-anchor for type II membrane protein transmembrane segment spans residues 25-45 (VGFFGSGVGFSLILGFSVAYA). The AB hydrolase-1 domain occupies 140 to 247 (PTVLLLPGLT…PLKAAATFSV (108 aa)). Catalysis depends on charge relay system residues Ser-220, Asp-346, and His-375.

This sequence belongs to the AB hydrolase superfamily. AB hydrolase 4 family.

The protein localises to the membrane. The enzyme catalyses a 1,2-diacyl-sn-glycero-3-phosphocholine + H2O = a 1-acyl-sn-glycero-3-phosphocholine + a fatty acid + H(+). It catalyses the reaction a 1,2-diacyl-sn-glycero-3-phosphocholine + H2O = a 2-acyl-sn-glycero-3-phosphocholine + a fatty acid + H(+). The catalysed reaction is 1-tetradecanoyl-2-(9Z,12Z-octadecadienoyl)-sn-glycero-3-phosphocholine + H2O = 2-(9Z,12Z-octadecadienoyl)-sn-glycero-3-phosphocholine + tetradecanoate + H(+). It carries out the reaction 1-tetradecanoyl-2-(9Z,12Z-octadecadienoyl)-sn-glycero-3-phosphocholine + H2O = 1-tetradecanoyl-sn-glycero-3-phosphocholine + (9Z,12Z)-octadecadienoate + H(+). The enzyme catalyses 1-tetradecanoyl-2-(5Z,8Z,11Z,14Z-eicosatetraenoyl)-sn-glycero-3-phosphocholine + H2O = 2-(5Z,8Z,11Z,14Z)-eicosatetraenoyl-sn-glycero-3-phosphocholine + tetradecanoate + H(+). It catalyses the reaction 1-tetradecanoyl-2-(4Z,7Z,10Z,13Z,16Z,19Z-docosahexaenoyl)-sn-glycero-3-phosphocholine + H2O = 2-(4Z,7Z,10Z,13Z,16Z,19Z-docosahexaenoyl)-sn-glycero-3-phosphocholine + tetradecanoate + H(+). The catalysed reaction is 1,2-ditetradecanoyl-sn-glycero-3-phosphocholine + H2O = 2-tetradecanoyl-sn-glycero-3-phosphocholine + tetradecanoate + H(+). It carries out the reaction 1-octadecanoyl-2-acetyl-sn-glycero-3-phosphocholine + H2O = 1-octadecanoyl-sn-glycero-3-phosphocholine + acetate + H(+). The enzyme catalyses 1,2-ditetradecanoyl-sn-glycero-3-phosphocholine + H2O = 1-tetradecanoyl-sn-glycero-3-phosphocholine + tetradecanoate + H(+). It catalyses the reaction 1-octadecanoyl-2-pentanoyl-sn-glycero-3-phosphocholine + H2O = pentanoate + 1-octadecanoyl-sn-glycero-3-phosphocholine + H(+). The catalysed reaction is 1-octadecanoyl-2-hexanoyl-sn-glycero-3-phosphocholine + H2O = hexanoate + 1-octadecanoyl-sn-glycero-3-phosphocholine + H(+). It carries out the reaction 1-octadecanoyl-2-octanoyl-sn-glycero-3-phosphocholine + H2O = 1-octadecanoyl-sn-glycero-3-phosphocholine + octanoate + H(+). The enzyme catalyses 1-octadecanoyl-2-nonanoyl-sn-glycero-3-phosphocholine + H2O = nonanoate + 1-octadecanoyl-sn-glycero-3-phosphocholine + H(+). It catalyses the reaction 1-O-hexadecyl-2-nonadioyl-sn-glycero-3-phosphocholine + H2O = nonanedioate + 1-O-hexadecyl-sn-glycero-3-phosphocholine + H(+). The catalysed reaction is 1-hexadecanoyl-2-nonadioyl-sn-glycero-3-phosphocholine + H2O = nonanedioate + 1-hexadecanoyl-sn-glycero-3-phosphocholine + H(+). It carries out the reaction 1-hexadecanoyl-2-(9-oxononanoyl)-sn-glycero-3-phosphocholine + H2O = 9-oxononanoate + 1-hexadecanoyl-sn-glycero-3-phosphocholine + H(+). The enzyme catalyses 1-hexadecanoyl-2-(5-oxopentanoyl)-sn-glycero-3-phosphocholine + H2O = 5-oxopentanoate + 1-hexadecanoyl-sn-glycero-3-phosphocholine + H(+). It catalyses the reaction 1-hexadecanoyl-2-glutaroyl-sn-glycero-3-phosphocholine + H2O = glutarate + 1-hexadecanoyl-sn-glycero-3-phosphocholine + H(+). The catalysed reaction is 1-O-hexadecyl-2-acetyl-sn-glycero-3-phosphocholine + H2O = 1-O-hexadecyl-sn-glycero-3-phosphocholine + acetate + H(+). Functionally, phospholipase that may play a role in phospholipids remodeling. May selectively cleave myristate (C14)-containing phosphatidylcholines through its predominant phospholipase 1 activity, cleaving preferentially acyl groups in sn1 position. In parallel, may have a minor phospholipase 2 activity acting on acyl groups in position sn2. In addition to (C14)-containing phosphatidylcholines, may also act on other medium-chain-containing and oxidatively truncated phospholipids. The protein is Phospholipase ABHD3 of Bos taurus (Bovine).